Reading from the N-terminus, the 137-residue chain is Small ribosomal subunit protein uS12 (137 aa).

Positions 1–57 (MPTINQLVRKPRKSKVEKSKSPALNVGYNSHKKVQTNVSSPQKRGVATRVGTMTPKK) are disordered. D102 bears the 3-methylthioaspartic acid mark.

The protein belongs to the universal ribosomal protein uS12 family. In terms of assembly, part of the 30S ribosomal subunit. Contacts proteins S8 and S17. May interact with IF1 in the 30S initiation complex.

Functionally, with S4 and S5 plays an important role in translational accuracy. In terms of biological role, interacts with and stabilizes bases of the 16S rRNA that are involved in tRNA selection in the A site and with the mRNA backbone. Located at the interface of the 30S and 50S subunits, it traverses the body of the 30S subunit contacting proteins on the other side and probably holding the rRNA structure together. The combined cluster of proteins S8, S12 and S17 appears to hold together the shoulder and platform of the 30S subunit. The sequence is that of Small ribosomal subunit protein uS12 from Streptococcus sanguinis (strain SK36).